A 197-amino-acid polypeptide reads, in one-letter code: NAD(P)H-quinone oxidoreductase subunit 6, chloroplastic (197 aa).

Helical transmembrane passes span 10 to 30 (FVLA…VLLV), 39 to 59 (LGLV…DFVA), 60 to 80 (AAQL…AVMI), 94 to 114 (IGYI…SFVI), and 147 to 167 (LLGE…AALV).

Belongs to the complex I subunit 6 family. In terms of assembly, NDH is composed of at least 16 different subunits, 5 of which are encoded in the nucleus.

It is found in the plastid. The protein localises to the chloroplast thylakoid membrane. The catalysed reaction is a plastoquinone + NADH + (n+1) H(+)(in) = a plastoquinol + NAD(+) + n H(+)(out). It carries out the reaction a plastoquinone + NADPH + (n+1) H(+)(in) = a plastoquinol + NADP(+) + n H(+)(out). Functionally, NDH shuttles electrons from NAD(P)H:plastoquinone, via FMN and iron-sulfur (Fe-S) centers, to quinones in the photosynthetic chain and possibly in a chloroplast respiratory chain. The immediate electron acceptor for the enzyme in this species is believed to be plastoquinone. Couples the redox reaction to proton translocation, and thus conserves the redox energy in a proton gradient. In Adiantum capillus-veneris (Maidenhair fern), this protein is NAD(P)H-quinone oxidoreductase subunit 6, chloroplastic (ndhG).